The primary structure comprises 353 residues: MWVMSQVRSMEPDLTLAAVYQAAANLTEQDKEIFSEAVKTAFSVCSSAAPSARLRMIETPTQNFMFVTSVIPSGVPSGEKKTKLNIDAALDNLALSFANKKSKKMARTYLLQNVSRTQDQQVAISGTYILYTKKHIETSLMLDKTKLVKQILEYAETPNLLGYTDVRDLECLLWLVFCGPKSFCQSDSCFGYSKTGYNAAFPNLLPPYLYECGQNNGLFFGIVQAYVFSWYSDFDFSALEISERARRRIRSLLYDLKQKFSEQEISVLPVASQMCIFCALYKQNKLSLEYVSGDLKTSVFSPIIIKDCLCVQTTISTTQMLPGTKSSAIFPVYDLRKLLSALVISEGSVRFDI.

Belongs to the herpesviridae UL95 family.

In Homo sapiens (Human), this protein is Protein U67 (U67).